The following is a 130-amino-acid chain: uncharacterized protein (130 aa).

Positions 1–26 (MKFIYKLLFILSIVLFLFNNIITING) are cleaved as a signal peptide. Asparagine 88 carries N-linked (GlcNAc...) asparagine glycosylation.

The protein resides in the secreted. This is an uncharacterized protein from Dictyostelium discoideum (Social amoeba).